We begin with the raw amino-acid sequence, 230 residues long: MRNLPIIALDFKSADEVHTFLNKFNEPLCVKIGMELFYQTGPALIKSIKKRGHDIFLDLKLHDIPNTVSKAMEGLARLDVDLVNVHAAGGIKMMEEAKKGLRKHNADIKIIAVTQLTSTTETQLHEEQNIQTSIEEAVLNYARLTKKAGLDGVVCSPLEAEMISKELGTDFLKVTPGIRPKGAARNDQQRITTPEEAKTLGSTHIVVGRPITQSEHPIDSYHKIKESWLS.

Substrate-binding positions include aspartate 10, lysine 31, 58–67, threonine 117, arginine 179, glutamine 188, glycine 208, and arginine 209; that span reads DLKLHDIPNT. Lysine 60 serves as the catalytic Proton donor.

The protein belongs to the OMP decarboxylase family. Type 1 subfamily. In terms of assembly, homodimer.

The catalysed reaction is orotidine 5'-phosphate + H(+) = UMP + CO2. It functions in the pathway pyrimidine metabolism; UMP biosynthesis via de novo pathway; UMP from orotate: step 2/2. Functionally, catalyzes the decarboxylation of orotidine 5'-monophosphate (OMP) to uridine 5'-monophosphate (UMP). This is Orotidine 5'-phosphate decarboxylase from Staphylococcus epidermidis (strain ATCC 12228 / FDA PCI 1200).